A 308-amino-acid chain; its full sequence is Aspartate carbamoyltransferase catalytic subunit (308 aa).

Residues R55 and T56 each contribute to the carbamoyl phosphate site. K83 contributes to the L-aspartate binding site. Carbamoyl phosphate contacts are provided by R105, H133, and Q136. L-aspartate is bound by residues R166 and R223. Carbamoyl phosphate-binding residues include G264 and P265.

Belongs to the aspartate/ornithine carbamoyltransferase superfamily. ATCase family. In terms of assembly, heterododecamer (2C3:3R2) of six catalytic PyrB chains organized as two trimers (C3), and six regulatory PyrI chains organized as three dimers (R2).

It carries out the reaction carbamoyl phosphate + L-aspartate = N-carbamoyl-L-aspartate + phosphate + H(+). The protein operates within pyrimidine metabolism; UMP biosynthesis via de novo pathway; (S)-dihydroorotate from bicarbonate: step 2/3. Its function is as follows. Catalyzes the condensation of carbamoyl phosphate and aspartate to form carbamoyl aspartate and inorganic phosphate, the committed step in the de novo pyrimidine nucleotide biosynthesis pathway. This Salinispora tropica (strain ATCC BAA-916 / DSM 44818 / JCM 13857 / NBRC 105044 / CNB-440) protein is Aspartate carbamoyltransferase catalytic subunit.